Here is a 344-residue protein sequence, read N- to C-terminus: Dihydroorotase (344 aa).

Zn(2+)-binding residues include H13 and H15. Residues 15–17 (HFR) and N41 contribute to the substrate site. Positions 98, 135, and 173 each coordinate Zn(2+). K98 carries the post-translational modification N6-carboxylysine. H135 serves as a coordination point for substrate. L218 contacts substrate. Zn(2+) is bound at residue D246. The active site involves D246. Positions 250 and 262 each coordinate substrate.

This sequence belongs to the metallo-dependent hydrolases superfamily. DHOase family. Class II DHOase subfamily. In terms of assembly, homodimer. The cofactor is Zn(2+).

It carries out the reaction (S)-dihydroorotate + H2O = N-carbamoyl-L-aspartate + H(+). Its pathway is pyrimidine metabolism; UMP biosynthesis via de novo pathway; (S)-dihydroorotate from bicarbonate: step 3/3. Its function is as follows. Catalyzes the reversible cyclization of carbamoyl aspartate to dihydroorotate. This Shewanella sediminis (strain HAW-EB3) protein is Dihydroorotase.